Here is a 370-residue protein sequence, read N- to C-terminus: Mesoderm posterior protein 2 (370 aa).

Disordered stretches follow at residues 51-89 (PSQP…EREK), 231-265 (SLER…HWTQ), and 325-350 (TSED…GLQL). Over residues 57-77 (PARSTRTTQATAPRRTRPAPA) the composition is skewed to low complexity. Residues 79–133 (GQRQSASEREKLRMRTLARALQELRRFLPPSVAPAGQSLTKIETLRLAIRYIGHL) enclose the bHLH domain. The span at 325–334 (TSEDQGSSPA) shows a compositional bias: polar residues. The tract at residues 326 to 330 (SEDQG) is may contain a degradation domain.

Post-translationally, degraded by the proteasome. In terms of processing, phosphorylated.

The protein localises to the nucleus. In terms of biological role, transcription factor with important role in somitogenesis. Defines the rostrocaudal patterning of the somite by participating in distinct Notch pathways. Also regulates the FGF signaling pathway. Specifies the rostral half of the somites. Generates rostro-caudal polarity of somites by down-regulating in the presumptive rostral domain DLL1, a Notch ligand. Participates in the segment border formation by activating in the anterior presomitic mesoderm LFNG, a negative regulator of DLL1-Notch signaling. Acts as a strong suppressor of Notch activity. Together with MESP1 is involved in the epithelialization of somitic mesoderm and in the development of cardiac mesoderm. May play a role with Tcf15 in the differentiation of myotomal and sclerotomal cells by regulating Pax family genes. Also controls the expression of the protocadherin PCDH8/PAPC, EPHA4, RIPPLY2, NOTCH2, FGFR1, and CER1. Binds to the E-boxes within the EPH4A and RIPPLY2 enhancers. The polypeptide is Mesoderm posterior protein 2 (Mesp2) (Mus musculus (Mouse)).